The primary structure comprises 163 residues: Putative C-type lectin protein FPV239 (163 aa).

Positions 48–159 constitute a C-type lectin domain; it reads CKEGWVGYNK…CFLPKKWICR (112 aa). Intrachain disulfides connect Cys76–Cys158 and Cys137–Cys150.

The polypeptide is Putative C-type lectin protein FPV239 (Fowlpox virus (strain NVSL) (FPV)).